Reading from the N-terminus, the 164-residue chain is Nitric oxide synthase, inducible (164 aa).

A (6R)-L-erythro-5,6,7,8-tetrahydrobiopterin-binding site is contributed by F3. Y18 lines the heme b pocket. The calmodulin-binding stretch occupies residues 42 to 62 (FKGLIRAVLFSQTLIKSALAK). A Flavodoxin-like domain is found at 66–164 (CTVLYATETG…SRMYPHFCAF (99 aa)). FMN-binding residues include T72, E73, T74, K76, S77, S118, T119, S155, and C162.

The protein belongs to the NOS family. In terms of assembly, homodimer. The cofactor is heme b. FAD serves as cofactor. FMN is required as a cofactor. Requires (6R)-L-erythro-5,6,7,8-tetrahydrobiopterin as cofactor.

Its subcellular location is the cytoplasm. It localises to the cytosol. The catalysed reaction is 2 L-arginine + 3 NADPH + 4 O2 + H(+) = 2 L-citrulline + 2 nitric oxide + 3 NADP(+) + 4 H2O. Not stimulated by calcium/calmodulin. Functionally, produces nitric oxide (NO) which is a messenger molecule with diverse functions throughout the body. In macrophages, NO mediates tumoricidal and bactericidal actions. Also has nitrosylase activity and mediates cysteine S-nitrosylation of cytoplasmic target proteins such COX2. The protein is Nitric oxide synthase, inducible (nos2) of Carassius auratus (Goldfish).